Here is a 398-residue protein sequence, read N- to C-terminus: Elongation factor Tu (398 aa).

In terms of domain architecture, tr-type G spans 10–207 (KPHVNIGTIG…TVDEYIPEPE (198 aa)). A G1 region spans residues 19 to 26 (GHVDHGKT). Residue 19–26 (GHVDHGKT) coordinates GTP. Residue Thr-26 participates in Mg(2+) binding. The G2 stretch occupies residues 63 to 67 (GITIN). Positions 84–87 (DAPG) are G3. Residues 84-88 (DAPGH) and 139-142 (NKVD) contribute to the GTP site. The tract at residues 139–142 (NKVD) is G4. A G5 region spans residues 177 to 179 (SAL).

The protein belongs to the TRAFAC class translation factor GTPase superfamily. Classic translation factor GTPase family. EF-Tu/EF-1A subfamily. In terms of assembly, monomer.

It is found in the cytoplasm. It carries out the reaction GTP + H2O = GDP + phosphate + H(+). In terms of biological role, GTP hydrolase that promotes the GTP-dependent binding of aminoacyl-tRNA to the A-site of ribosomes during protein biosynthesis. This Streptococcus thermophilus (strain CNRZ 1066) protein is Elongation factor Tu.